The chain runs to 1388 residues: Rho-associated protein kinase 2 (1388 aa).

Residues 1-26 (MSRPPPTGKMPGAPEAAPGDGAGAGR) are disordered. One can recognise a Protein kinase domain in the interval 92-354 (YDVVKVIGRG…VEEIKQHPFF (263 aa)). ATP contacts are provided by residues 98 to 106 (IGRGAFGEV) and K121. The active-site Proton acceptor is D214. The 69-residue stretch at 357-425 (DQWNWDNIRE…FRENLLLSDS (69 aa)) folds into the AGC-kinase C-terminal domain. The interval 363 to 784 (NIRETAAPVV…LNELLKQKDV (422 aa)) is interaction with PPP1R12A. The interaction with NPM1 stretch occupies residues 373–420 (PELSSDIDSSNFDDIEDDKGDVETFPIPKAFVGNQLPFIGFTYFRENL). Phosphothreonine; by ROCK2 is present on T414. Positions 439–1131 (SEESQEIQKK…QLQALHIGMD (693 aa)) form a coiled coil. In terms of domain architecture, REM-1 spans 497–573 (TLRQLEREKA…LDEANALLRT (77 aa)). A compositionally biased stretch (basic and acidic residues) spans 512-530 (NAEYQRKADHEADKKRNLE). Residues 512 to 532 (NAEYQRKADHEADKKRNLEND) are disordered. Y722 carries the post-translational modification Phosphotyrosine; by SRC. One can recognise a RhoBD domain in the interval 979–1047 (TSDVANLANE…LAEIMNRKEP (69 aa)). The tract at residues 979 to 1047 (TSDVANLANE…LAEIMNRKEP (69 aa)) is RHOA binding. A Phosphoserine modification is found at S1137. The region spanning 1150 to 1349 (ESRLEGWLSL…WVSRLVKKIP (200 aa)) is the PH domain. Phosphothreonine is present on T1212. The segment at 1260–1315 (GHEFIPTLYHFPTNCEACMKPLWHMFKPPPALECRRCHIKCHKDHMDKKEEIIAPC) adopts a Phorbol-ester/DAG-type zinc-finger fold. Positions 1345–1388 (VKKIPKKPPAPDPFARSSPRTSMKIQQNQSIRRPSRQLAPNKPS) are disordered. 2 positions are modified to phosphoserine: S1362 and S1374. The span at 1362-1376 (SPRTSMKIQQNQSIR) shows a compositional bias: polar residues.

The protein belongs to the protein kinase superfamily. AGC Ser/Thr protein kinase family. In terms of assembly, homodimer. Interacts with IRS1. Interacts with RAF1. Interacts with RHOA (activated by GTP), RHOB and RHOC. Interacts with PPP1R12A. Interacts with EP300. Interacts with CHORDC1. Interacts with BRCA2. Interacts with NPM1; this interaction enhances ROCK2 activity. Interacts with SORL1. Interacts with PJVK. Mg(2+) serves as cofactor. Post-translationally, autophosphorylated. Phosphorylation at Tyr-722 reduces its binding to RHOA and is crucial for focal adhesion dynamics. Dephosphorylation by PTPN11 stimulates its RHOA binding activity. In terms of processing, cleaved by granzyme B during apoptosis. This leads to constitutive activation of the kinase and membrane blebbing. Highly expressed in brain, heart, lung, liver, stomach, spleen, kidney, testis, muscle, embryo and placenta. Isoform 2 is expressed predominantly in the skeletal muscle.

The protein localises to the cytoplasm. It is found in the cell membrane. Its subcellular location is the nucleus. The protein resides in the cytoskeleton. It localises to the microtubule organizing center. The protein localises to the centrosome. It carries out the reaction L-seryl-[protein] + ATP = O-phospho-L-seryl-[protein] + ADP + H(+). It catalyses the reaction L-threonyl-[protein] + ATP = O-phospho-L-threonyl-[protein] + ADP + H(+). Activated by RHOA binding. Inhibited by Y-27632. In terms of biological role, protein kinase which is a key regulator of actin cytoskeleton and cell polarity. Involved in regulation of smooth muscle contraction, actin cytoskeleton organization, stress fiber and focal adhesion formation, neurite retraction, cell adhesion and motility via phosphorylation of ADD1, BRCA2, CNN1, EZR, DPYSL2, EP300, MSN, MYL9/MLC2, NPM1, RDX, PPP1R12A and VIM. Phosphorylates SORL1 and IRF4. Acts as a negative regulator of VEGF-induced angiogenic endothelial cell activation. Positively regulates the activation of p42/MAPK1-p44/MAPK3 and of p90RSK/RPS6KA1 during myogenic differentiation. Plays an important role in the timely initiation of centrosome duplication. Inhibits keratinocyte terminal differentiation. May regulate closure of the eyelids and ventral body wall through organization of actomyosin bundles. Plays a critical role in the regulation of spine and synaptic properties in the hippocampus. Plays a role in placental homeostasis during the perinatal period. Plays an important role in generating the circadian rhythm of the aortic myofilament Ca(2+) sensitivity and vascular contractility by modulating the myosin light chain phosphorylation. In Mus musculus (Mouse), this protein is Rho-associated protein kinase 2 (Rock2).